The sequence spans 154 residues: 17.8 kDa class I heat shock protein (154 aa).

The sHSP domain occupies 40–154 (ESSAFANTRI…PEVKSIEISG (115 aa)).

It belongs to the small heat shock protein (HSP20) family. As to quaternary structure, forms oligomeric structures.

The protein resides in the cytoplasm. This Solanum lycopersicum (Tomato) protein is 17.8 kDa class I heat shock protein.